Here is a 358-residue protein sequence, read N- to C-terminus: NAC domain-containing protein 12 (358 aa).

In terms of domain architecture, NAC spans Val-16 to Lys-177. The DNA-binding element occupies Ile-116–Ile-183.

As to expression, stems and roots, specifically in interfascicular fibers (sclerenchyma), cells differentiating into vascular vessels (cambium), and xylem.

It is found in the nucleus. In terms of biological role, transcriptional activator of genes involved in biosynthesis of secondary walls. Together with NST1, required for the secondary cell wall thickening and lignification of sclerenchymatous fibers and secondary xylem vessels (tracheary elements). Seems to repress the secondary cell wall thickening of xylary fibers. May also regulate the secondary cell wall lignification of other tissues. Binds to and activates the promoter of MYB46. This chain is NAC domain-containing protein 12, found in Arabidopsis thaliana (Mouse-ear cress).